Reading from the N-terminus, the 101-residue chain is UPF0473 protein LAF_0524 (101 aa).

It belongs to the UPF0473 family.

The chain is UPF0473 protein LAF_0524 from Limosilactobacillus fermentum (strain NBRC 3956 / LMG 18251) (Lactobacillus fermentum).